We begin with the raw amino-acid sequence, 138 residues long: Putative pre-16S rRNA nuclease (138 aa).

The protein belongs to the YqgF nuclease family.

It is found in the cytoplasm. In terms of biological role, could be a nuclease involved in processing of the 5'-end of pre-16S rRNA. In Bacteroides fragilis (strain ATCC 25285 / DSM 2151 / CCUG 4856 / JCM 11019 / LMG 10263 / NCTC 9343 / Onslow / VPI 2553 / EN-2), this protein is Putative pre-16S rRNA nuclease.